The chain runs to 408 residues: Argininosuccinate synthase (408 aa).

Residues 9-17 and alanine 36 each bind ATP; that span reads AYSGGLDTS. L-citrulline contacts are provided by tyrosine 87 and serine 92. Residue glycine 117 coordinates ATP. Residues threonine 119, asparagine 123, and aspartate 124 each contribute to the L-aspartate site. Asparagine 123 is a binding site for L-citrulline. L-citrulline is bound by residues arginine 127, serine 176, serine 185, glutamate 261, and tyrosine 273.

Belongs to the argininosuccinate synthase family. Type 1 subfamily. Homotetramer.

The protein localises to the cytoplasm. It carries out the reaction L-citrulline + L-aspartate + ATP = 2-(N(omega)-L-arginino)succinate + AMP + diphosphate + H(+). Its pathway is amino-acid biosynthesis; L-arginine biosynthesis; L-arginine from L-ornithine and carbamoyl phosphate: step 2/3. The protein is Argininosuccinate synthase of Deinococcus deserti (strain DSM 17065 / CIP 109153 / LMG 22923 / VCD115).